Here is a 247-residue protein sequence, read N- to C-terminus: DNA polymerase sliding clamp (247 aa).

The protein belongs to the PCNA family. In terms of assembly, homotrimer. The subunits circularize to form a toroid; DNA passes through its center. Replication factor C (RFC) is required to load the toroid on the DNA.

Its function is as follows. Sliding clamp subunit that acts as a moving platform for DNA processing. Responsible for tethering the catalytic subunit of DNA polymerase and other proteins to DNA during high-speed replication. This Haloarcula marismortui (strain ATCC 43049 / DSM 3752 / JCM 8966 / VKM B-1809) (Halobacterium marismortui) protein is DNA polymerase sliding clamp.